The sequence spans 485 residues: Glutamyl-tRNA(Gln) amidotransferase subunit A (485 aa).

Catalysis depends on charge relay system residues Lys-79 and Ser-154. Ser-178 (acyl-ester intermediate) is an active-site residue.

Belongs to the amidase family. GatA subfamily. In terms of assembly, heterotrimer of A, B and C subunits.

It carries out the reaction L-glutamyl-tRNA(Gln) + L-glutamine + ATP + H2O = L-glutaminyl-tRNA(Gln) + L-glutamate + ADP + phosphate + H(+). Its function is as follows. Allows the formation of correctly charged Gln-tRNA(Gln) through the transamidation of misacylated Glu-tRNA(Gln) in organisms which lack glutaminyl-tRNA synthetase. The reaction takes place in the presence of glutamine and ATP through an activated gamma-phospho-Glu-tRNA(Gln). This chain is Glutamyl-tRNA(Gln) amidotransferase subunit A, found in Geobacillus kaustophilus (strain HTA426).